The sequence spans 357 residues: S-adenosylmethionine:tRNA ribosyltransferase-isomerase (357 aa).

Belongs to the QueA family. In terms of assembly, monomer.

The protein resides in the cytoplasm. The enzyme catalyses 7-aminomethyl-7-carbaguanosine(34) in tRNA + S-adenosyl-L-methionine = epoxyqueuosine(34) in tRNA + adenine + L-methionine + 2 H(+). It participates in tRNA modification; tRNA-queuosine biosynthesis. Transfers and isomerizes the ribose moiety from AdoMet to the 7-aminomethyl group of 7-deazaguanine (preQ1-tRNA) to give epoxyqueuosine (oQ-tRNA). The sequence is that of S-adenosylmethionine:tRNA ribosyltransferase-isomerase from Buchnera aphidicola subsp. Schizaphis graminum (strain Sg).